Reading from the N-terminus, the 428-residue chain is Histidine--tRNA ligase (428 aa).

The protein belongs to the class-II aminoacyl-tRNA synthetase family. Homodimer.

It is found in the cytoplasm. It catalyses the reaction tRNA(His) + L-histidine + ATP = L-histidyl-tRNA(His) + AMP + diphosphate + H(+). The polypeptide is Histidine--tRNA ligase (Mesomycoplasma hyopneumoniae (strain 232) (Mycoplasma hyopneumoniae)).